The following is a 3029-amino-acid chain: Polycystin-1-related protein (3029 aa).

The N-terminal stretch at 1-21 (MAKHLYLAFSLILVPFLVSKA) is a signal peptide. The Extracellular portion of the chain corresponds to 22-1685 (KQTSNGEVPW…RDTDKLKNSP (1664 aa)). One can recognise a WSC domain in the interval 29-121 (VPWLVGCYRY…KNVASVYSTA (93 aa)). PKD domains lie at 364-450 (EGHC…IKGV) and 546-634 (DHLF…PECY). In terms of domain architecture, REJ spans 633–1476 (CYTRGVAIVG…NPYFSDMNHT (844 aa)). Disordered regions lie at residues 754–773 (RKGPITLSASSSHDPDHPDE), 909–931 (CPSDDHSDRVTPSTTPMTDSNSP), and 989–1051 (TSAI…PNKP). Polar residues predominate over residues 918-931 (VTPSTTPMTDSNSP). Acidic residues predominate over residues 997 to 1013 (SGDVDDDEVNNDNDDDS). A compositionally biased stretch (polar residues) spans 1020–1047 (TLPTPLSMTNANSVNKPIITTDTPSFNK). Positions 1525–1671 (RNVHVINQTA…GFIQPPNSLH (147 aa)) constitute a GAIN-B domain. 2 disulfide bridges follow: Cys1624–Cys1651 and Cys1639–Cys1653. Residues 1624-1671 (CFYWNKRGKHWASDGCRLEKSINHTLVCRCNHLTAFSGGFIQPPNSLH) are GPS. A helical transmembrane segment spans residues 1686–1706 (LTMVLVISILVMYFLLLGFCV). At 1707 to 1895 (KADRHDKKKL…SYSRFTRAQR (189 aa)) the chain is on the cytoplasmic side. The PLAT domain occupies 1733–1851 (SRFQLSVQTG…GNGKVECELF (119 aa)). Residues 1896-1916 (LSCCLSLLLSFLCVNIAWYRP) form a helical membrane-spanning segment. Over 1917 to 1933 (KIEVTEVLGVLDVSANS) the chain is Extracellular. A helical transmembrane segment spans residues 1934–1954 (IMIGVLGSLMVLPVNFLWIFF). Topologically, residues 1955 to 2101 (FRYSRRSLSR…YRSKFSLPHG (147 aa)) are cytoplasmic. The helical transmembrane segment at 2102–2122 (FVYVAWFGCLITGTVTSAITI) threads the bilayer. The Extracellular segment spans residues 2123–2140 (WYGLSFGWDLSVHWFQSL). A helical transmembrane segment spans residues 2141–2161 (VFSLLESLLLSQPIMVLAFIF). At 2162-2250 (YMSHKTKSGK…SLKNRVLRNY (89 aa)) the chain is on the cytoplasmic side. A helical transmembrane segment spans residues 2251 to 2271 (VVELFVFIMFFVVTCALVFSV). Topologically, residues 2272 to 2462 (ADPDVYHLNQ…GYSYFIRFTK (191 aa)) are extracellular. The helical transmembrane segment at 2463-2483 (LLFVVFFLYLLQHEFFLALKM) threads the bilayer. Over 2484 to 2496 (TFSYFTNFWRVYQ) the chain is Cytoplasmic. The helical transmembrane segment at 2497–2517 (LLTIAISSACIVSYIHWSLSL) threads the bilayer. Over 2518 to 2538 (YALLREVETERQSRVFYLSRQ) the chain is Extracellular. A helical membrane pass occupies residues 2539 to 2559 (ISWSQGFLQASYSLLLFLLLI). At 2560-2586 (RCLHLLRPFRFVRHFGRILSTSISSLL) the chain is on the cytoplasmic side. A helical membrane pass occupies residues 2587–2607 (ACWVFGFILVVAFAHPGYLLF). The Extracellular segment spans residues 2608–2651 (GSVHSSFKSFGDAFLLVTSFFRLEGVARYQDFALEEQTLLLSTY). A helical transmembrane segment spans residues 2652-2672 (FALFLIGFCVIVRGSTAAVVL). Residues 2673-3029 (HGIRCLGKRR…PVGQRVVSAM (357 aa)) lie on the Cytoplasmic side of the membrane. Residues 2704–2726 (KKPKKPRPNSVSDLEETDDEDDL) form a disordered region. The segment covering 2716–2726 (DLEETDDEDDL) has biased composition (acidic residues).

This sequence belongs to the polycystin family. In terms of assembly, heterodimer of 2 chains generated by proteolytic processing; the large extracellular N-terminal fragment and the membrane-bound C-terminal fragment predominantly remain associated and non-covalently linked. Autoproteolytically processed at the GPS region of the GAIN-B domain; this cleavage modulates receptor activity. Component of the acid-insoluble and acid-soluble organic matrix of the aragonitic skeleton (at protein level).

It localises to the membrane. This is Polycystin-1-related protein from Acropora millepora (Staghorn coral).